A 585-amino-acid polypeptide reads, in one-letter code: Proline--tRNA ligase (585 aa).

It belongs to the class-II aminoacyl-tRNA synthetase family. ProS type 1 subfamily. In terms of assembly, homodimer.

It is found in the cytoplasm. The enzyme catalyses tRNA(Pro) + L-proline + ATP = L-prolyl-tRNA(Pro) + AMP + diphosphate. Catalyzes the attachment of proline to tRNA(Pro) in a two-step reaction: proline is first activated by ATP to form Pro-AMP and then transferred to the acceptor end of tRNA(Pro). As ProRS can inadvertently accommodate and process non-cognate amino acids such as alanine and cysteine, to avoid such errors it has two additional distinct editing activities against alanine. One activity is designated as 'pretransfer' editing and involves the tRNA(Pro)-independent hydrolysis of activated Ala-AMP. The other activity is designated 'posttransfer' editing and involves deacylation of mischarged Ala-tRNA(Pro). The misacylated Cys-tRNA(Pro) is not edited by ProRS. The polypeptide is Proline--tRNA ligase (Acidobacterium capsulatum (strain ATCC 51196 / DSM 11244 / BCRC 80197 / JCM 7670 / NBRC 15755 / NCIMB 13165 / 161)).